We begin with the raw amino-acid sequence, 472 residues long: Phenylalanine--tRNA ligase, mitochondrial (472 aa).

Substrate-binding positions include 157–160 (SAHQ), R179, 186–188 (QHY), and 193–195 (QLE). K202 is modified (N6-acetyllysine). Substrate-binding residues include E287 and F312. One can recognise an FDX-ACB domain in the interval 379-471 (SKYPAVFNDI…AVQLLGVEGR (93 aa)).

The protein belongs to the class-II aminoacyl-tRNA synthetase family. As to quaternary structure, monomer. Mainly expressed in the Purkinje cell of cerebellum.

Its subcellular location is the mitochondrion matrix. The protein resides in the mitochondrion. It catalyses the reaction tRNA(Phe) + L-phenylalanine + ATP = L-phenylalanyl-tRNA(Phe) + AMP + diphosphate + H(+). Functionally, is responsible for the charging of tRNA(Phe) with phenylalanine in mitochondrial translation. To a lesser extent, also catalyzes direct attachment of m-Tyr (an oxidized version of Phe) to tRNA(Phe), thereby opening the way for delivery of the misacylated tRNA to the ribosome and incorporation of ROS-damaged amino acid into proteins. The protein is Phenylalanine--tRNA ligase, mitochondrial (Fars2) of Rattus norvegicus (Rat).